The sequence spans 759 residues: Tripartite motif-containing protein 46 (759 aa).

A required for proximal axon localization, axon formation and migration region spans residues 1–166; sequence MAEGEDMQTF…VERYRQSVSV (166 aa). The RING-type 1; degenerate zinc finger occupies 33–59; that stretch reads CPVCQEMYKQPLVLPCTHNVCQACARE. Positions 67-98 are disordered; that stretch reads IGHGGDPSSEPTSPASTPSTRSPRLSRRTLPK. The segment covering 73-89 has biased composition (low complexity); the sequence is PSSEPTSPASTPSTRSP. Residues 172–231 form an RING-type 2; degenerate zinc finger; it reads CQLCKPPPLEATKGCSECRATFCNECFKLFHPWGTQKAQHEPTLPTLSFRPKGLMCPDHK. The B box-type zinc finger occupies 222–263; the sequence is PKGLMCPDHKEEVTHYCKTCQRLVCQLCRVRRTHSGHKITPV. Zn(2+) is bound by residues Cys227, His230, Cys249, and His255. The stretch at 294–400 forms a coiled coil; that stretch reads ELEETIRHTE…RATEALQTFR (107 aa). Ser330 is subject to Phosphoserine. The COS domain maps to 370–427; that stretch reads LKETDQPCFVQAAKQLHNRIARATEALQTFRPAASSSFRHCQLDVGREMKLLTELNFL. Residues 411 to 429 are required for microtubule association, proximal axon localization and axon formation; that stretch reads QLDVGREMKLLTELNFLRV. The 100-residue stretch at 429 to 528 folds into the Fibronectin type-III domain; sequence VPEAPVIDTQ…EDVHLHTPPA (100 aa). The 235-residue stretch at 513-747 folds into the B30.2/SPRY domain; that stretch reads GYGEYSEDVH…LQEPVGTKPE (235 aa). Ser627 carries the post-translational modification Phosphoserine.

This sequence belongs to the TRIM/RBCC family. Interacts with TUBB3 and TUBA4A. In terms of tissue distribution, expressed in primary hippocampal and cortical neurons.

It localises to the cell projection. Its subcellular location is the axon. The protein resides in the cytoplasm. It is found in the cytoskeleton. Functionally, microtubule-associated protein that is involved in the formation of parallel microtubule bundles linked by cross-bridges in the proximal axon. Required for the uniform orientation and maintenance of the parallel microtubule fascicles, which are important for efficient cargo delivery and trafficking in axons. Thereby also required for proper axon specification, the establishment of neuronal polarity and proper neuronal migration. This chain is Tripartite motif-containing protein 46, found in Rattus norvegicus (Rat).